We begin with the raw amino-acid sequence, 391 residues long: Uroporphyrinogen decarboxylase, chloroplastic (391 aa).

Residues 71 to 75 (RQAGR), F90, S120, D121, Y198, S253, and H368 contribute to the substrate site.

This sequence belongs to the uroporphyrinogen decarboxylase family. In terms of assembly, homodimer.

Its subcellular location is the plastid. The protein resides in the chloroplast. It catalyses the reaction uroporphyrinogen III + 4 H(+) = coproporphyrinogen III + 4 CO2. It participates in porphyrin-containing compound metabolism; protoporphyrin-IX biosynthesis; coproporphyrinogen-III from 5-aminolevulinate: step 4/4. Functionally, catalyzes the decarboxylation of four acetate groups of uroporphyrinogen-III to yield coproporphyrinogen-III. This Nicotiana tabacum (Common tobacco) protein is Uroporphyrinogen decarboxylase, chloroplastic (DCUP).